The following is a 457-amino-acid chain: tRNA-2-methylthio-N(6)-dimethylallyladenosine synthase (457 aa).

An MTTase N-terminal domain is found at 3–120 (KKVYVKTFGC…LPQMIDQRRA (118 aa)). The [4Fe-4S] cluster site is built by C12, C49, C83, C157, C161, and C164. One can recognise a Radical SAM core domain in the interval 143–377 (RVEGPSAFVS…QATIEENVAR (235 aa)). The TRAM domain occupies 380–447 (RSMVGKVERI…PHSLRGELLL (68 aa)).

This sequence belongs to the methylthiotransferase family. MiaB subfamily. In terms of assembly, monomer. Requires [4Fe-4S] cluster as cofactor.

The protein localises to the cytoplasm. It catalyses the reaction N(6)-dimethylallyladenosine(37) in tRNA + (sulfur carrier)-SH + AH2 + 2 S-adenosyl-L-methionine = 2-methylsulfanyl-N(6)-dimethylallyladenosine(37) in tRNA + (sulfur carrier)-H + 5'-deoxyadenosine + L-methionine + A + S-adenosyl-L-homocysteine + 2 H(+). Its function is as follows. Catalyzes the methylthiolation of N6-(dimethylallyl)adenosine (i(6)A), leading to the formation of 2-methylthio-N6-(dimethylallyl)adenosine (ms(2)i(6)A) at position 37 in tRNAs that read codons beginning with uridine. This chain is tRNA-2-methylthio-N(6)-dimethylallyladenosine synthase, found in Burkholderia ambifaria (strain ATCC BAA-244 / DSM 16087 / CCUG 44356 / LMG 19182 / AMMD) (Burkholderia cepacia (strain AMMD)).